Here is a 262-residue protein sequence, read N- to C-terminus: uncharacterized protein (262 aa).

One can recognise a BTB domain in the interval 5–107 (PLISLDVEGV…MIEHKLRTFC (103 aa)). The region spanning 182-195 (ISLPRNFTHIAHVG) is the CRIB domain.

This is an uncharacterized protein from Caenorhabditis elegans.